Reading from the N-terminus, the 256-residue chain is Dioxygenase lolE1 (256 aa).

Residues His125, Asp127, and His203 each contribute to the Fe cation site.

Belongs to the PhyH family. Homodimer. Fe cation serves as cofactor.

It functions in the pathway alkaloid biosynthesis. Functionally, dioxygenase; part of the gene cluster that mediates the biosynthesis of loline alkaloids, potent insecticidal agents composed of a pyrrolizidine ring system and an uncommon ether bridge linking carbons 2 and 7. Lolines are structurally differentiated by the various modifications of the L-amino group and include norloline, loline, N-methylloline, N-acetylloline, N-acetylnorloline, and N-formylloline. The first committed step is the condensation of O-acetyl-L-homoserine (derived from L-aspartic acid) and L-proline, probably catalyzed by the gamma-type pyridoxal 5'-phosphate(PLP)-dependent enzyme lolC, to give the diamino diacid, NACPP. Ensuing cyclization, decarboxylation, and acetylation steps yield 1-exo-acetamidopyrrolizidine (AcAP). LolO is required for installation of the ether bridge upon the pathway intermediate, 1-exo-acetamidopyrrolizidine (AcAP). In sequential 2-oxoglutarate- and O(2)-consuming steps, lolO removes hydrogens from C2 and C7 of AcAP to form both carbon-oxygen bonds in N-acetylnorloline (NANL), the precursor to all other lolines. The enzymes lolD, lolE, lolF and lolT have also been proposed to be involved in the ether-bridge installation. Further processing of the exocyclic moiety of NANL by fungal N-acetamidase (LolN), methyltransferase (LolM), and cytochrome P450 (LolP) enzymes, with occasional involvement of a plant acetyltransferase, generates the other known lolines. LolN transforms NANL to norlonine which is monomethylated and dimethylated to respectively lonine and N-methyllonine (NML) by lolM. LolP catalyzes hydroxylation of the methyl group in N-methylloline (NML) and further oxygenation to N-formylloline (NFL). A plant acetyltransferase is responsible for the acetylation of loline to form N-acetylloline (NAL). LolA might interact with aspartate kinase to prevent feedback inhibition of its activity by these end products and thereby promote production of L-homoserine from L-aspartate. The sequence is that of Dioxygenase lolE1 from Epichloe uncinata (Endophyte fungus).